We begin with the raw amino-acid sequence, 585 residues long: ATP-dependent lipid A-core flippase (585 aa).

5 helical membrane-spanning segments follow: residues 24 to 44 (LWKVFALAVLGNVIYALASAA), 65 to 85 (LLVPMLIIGIFALRGLGSFCG), 143 to 163 (ITVVLREGFTVIGLMGYMIYV), 165 to 185 (WKLTLLFLVLGPIIGVLIGYV), and 253 to 273 (PIIQLVISVFIALLVWLALSP). One can recognise an ABC transmembrane type-1 domain in the interval 29-310 (ALAVLGNVIY…LTEVNAVIQR (282 aa)). In terms of domain architecture, ABC transporter spans 342 to 578 (LEFKSLGFAY…DGAYAALHKL (237 aa)). 376–383 (GRSGSGKS) serves as a coordination point for ATP.

This sequence belongs to the ABC transporter superfamily. Lipid exporter (TC 3.A.1.106) family. As to quaternary structure, homodimer.

It localises to the cell inner membrane. The enzyme catalyses ATP + H2O + lipid A-core oligosaccharideSide 1 = ADP + phosphate + lipid A-core oligosaccharideSide 2.. Involved in lipopolysaccharide (LPS) biosynthesis. Translocates lipid A-core from the inner to the outer leaflet of the inner membrane. Transmembrane domains (TMD) form a pore in the inner membrane and the ATP-binding domain (NBD) is responsible for energy generation. The polypeptide is ATP-dependent lipid A-core flippase (Hahella chejuensis (strain KCTC 2396)).